The following is a 199-amino-acid chain: MYEGVIQDLIDELGKLPGIGPKSAQRIAFHILGADPSQVRRLAEVLLDVKERIRFCAICGNVAEHEQCRICADPRRDPTVLCVVEEPKDVVAIEKTREFHGRYHVLGGAISPIDGIGPDDLRIRELLQRLADGTVKELILATDPNLEGEATATYLARLVKPLGVRVTRLASGLPVGGDLEYADEVTLGRALEGRRQLDV.

The C4-type zinc finger occupies 56–71 (CAICGNVAEHEQCRIC). The 96-residue stretch at 79–174 (TVLCVVEEPK…RVTRLASGLP (96 aa)) folds into the Toprim domain.

The protein belongs to the RecR family.

Its function is as follows. May play a role in DNA repair. It seems to be involved in an RecBC-independent recombinational process of DNA repair. It may act with RecF and RecO. This chain is Recombination protein RecR, found in Acidothermus cellulolyticus (strain ATCC 43068 / DSM 8971 / 11B).